A 733-amino-acid polypeptide reads, in one-letter code: Centrosomal protein of 68 kDa (733 aa).

The span at 71–80 (SKEPVADRSK) shows a compositional bias: basic and acidic residues. Disordered regions lie at residues 71–92 (SKEPVADRSKPPLRGPLPSASV), 150–207 (GLSQ…SFAN), and 222–244 (VVGAGPPLQGSAQPLTSGSDATG). A compositionally biased stretch (low complexity) spans 178–190 (SSRSISASSVGSS). A compositionally biased stretch (polar residues) spans 231–241 (GSAQPLTSGSD). Serine 315 carries the post-translational modification Phosphoserine. The segment at 420 to 442 (PQLKTKEKEPPFPRQKRGRQHVS) is disordered. 2 positions are modified to phosphoserine: serine 453 and serine 459. Positions 497–571 (HSSLQVSDSD…KPLKTQPASK (75 aa)) are disordered. Over residues 540–569 (IQPQDSRGKSSLMSNQTLGVSSKPLKTQPA) the composition is skewed to polar residues.

In terms of assembly, interacts with CNTLN; the interaction recruits CEP68 to the centrosome. Interacts with the SCF(FBXW11) complex which contains SKP1, CUL1 and FBXW11; the interaction is probably mediated by FBXW11 and the complex also contains CDK5RAP2 and PCNT. Also interacts with F-box protein BTRC. Interacts with serine/threonine-protein kinase PLK1; the interaction leads to phosphorylation of CEP68 and its subsequent degradation. Interacts with NEK2; the interaction leads to phosphorylation of CEP68. Phosphorylation by PLK1 is required for binding to BTRC in prometaphase. Phosphorylated directly or indirectly by NEK2. NEK2-mediated phosphorylation promotes CEP68 dissociation from the centrosome and its degradation at the onset of mitosis. In terms of processing, ubiquitinated and targeted for proteasomal degradation in early mitosis by the SCF(BTRC) and/or SCF(FBXW11) E3 ubiquitin-protein ligase complexes. Degradation is complete by prometaphase and is required for removal of CDK5RAP2 from the peripheral pericentriolar material and subsequent centriole separation.

It is found in the cytoplasm. The protein resides in the cytoskeleton. It localises to the microtubule organizing center. The protein localises to the centrosome. Involved in maintenance of centrosome cohesion, probably as part of a linker structure which prevents centrosome splitting. Required for localization of CDK5RAP2 to the centrosome during interphase. Contributes to CROCC/rootletin filament formation. This is Centrosomal protein of 68 kDa (Cep68) from Mus musculus (Mouse).